Here is a 90-residue protein sequence, read N- to C-terminus: UPF0367 protein Ava_2513 (90 aa).

The protein belongs to the UPF0367 family.

This Trichormus variabilis (strain ATCC 29413 / PCC 7937) (Anabaena variabilis) protein is UPF0367 protein Ava_2513.